The chain runs to 248 residues: Triosephosphate isomerase (248 aa).

Substrate contacts are provided by N11 and K13. The Electrophile role is filled by H95. E165 (proton acceptor) is an active-site residue.

This sequence belongs to the triosephosphate isomerase family. Homodimer.

The protein localises to the cytoplasm. It carries out the reaction dihydroxyacetone phosphate = methylglyoxal + phosphate. It catalyses the reaction D-glyceraldehyde 3-phosphate = dihydroxyacetone phosphate. The protein operates within carbohydrate degradation; glycolysis; D-glyceraldehyde 3-phosphate from glycerone phosphate: step 1/1. It functions in the pathway carbohydrate biosynthesis; gluconeogenesis. In terms of biological role, triosephosphate isomerase is an extremely efficient metabolic enzyme that catalyzes the interconversion between dihydroxyacetone phosphate (DHAP) and D-glyceraldehyde-3-phosphate (G3P) in glycolysis and gluconeogenesis. It is also responsible for the non-negligible production of methylglyoxal a reactive cytotoxic side-product that modifies and can alter proteins, DNA and lipids. This is Triosephosphate isomerase (tpi1) from Xenopus tropicalis (Western clawed frog).